Reading from the N-terminus, the 364-residue chain is tRNA 2-selenouridine synthase (364 aa).

Residues 14–137 (LIADTPIIDV…LRQTAIQATI (124 aa)) form the Rhodanese domain. Catalysis depends on cysteine 97, which acts as the S-selanylcysteine intermediate.

Belongs to the SelU family. Monomer.

The enzyme catalyses 5-methylaminomethyl-2-thiouridine(34) in tRNA + selenophosphate + (2E)-geranyl diphosphate + H2O + H(+) = 5-methylaminomethyl-2-selenouridine(34) in tRNA + (2E)-thiogeraniol + phosphate + diphosphate. It carries out the reaction 5-methylaminomethyl-2-thiouridine(34) in tRNA + (2E)-geranyl diphosphate = 5-methylaminomethyl-S-(2E)-geranyl-thiouridine(34) in tRNA + diphosphate. The catalysed reaction is 5-methylaminomethyl-S-(2E)-geranyl-thiouridine(34) in tRNA + selenophosphate + H(+) = 5-methylaminomethyl-2-(Se-phospho)selenouridine(34) in tRNA + (2E)-thiogeraniol. It catalyses the reaction 5-methylaminomethyl-2-(Se-phospho)selenouridine(34) in tRNA + H2O = 5-methylaminomethyl-2-selenouridine(34) in tRNA + phosphate. Its function is as follows. Involved in the post-transcriptional modification of the uridine at the wobble position (U34) of tRNA(Lys), tRNA(Glu) and tRNA(Gln). Catalyzes the conversion of 2-thiouridine (S2U-RNA) to 2-selenouridine (Se2U-RNA). Acts in a two-step process involving geranylation of 2-thiouridine (S2U) to S-geranyl-2-thiouridine (geS2U) and subsequent selenation of the latter derivative to 2-selenouridine (Se2U) in the tRNA chain. The chain is tRNA 2-selenouridine synthase from Escherichia coli O45:K1 (strain S88 / ExPEC).